The sequence spans 745 residues: Cellulose synthase-like protein E2 (745 aa).

Over residues 1 to 14 the composition is skewed to gly residues; it reads MAGSGGGVVSGGRQ. The disordered stretch occupies residues 1 to 20; the sequence is MAGSGGGVVSGGRQRGPPLF. 2 helical membrane passes run 29 to 49 and 66 to 86; these read AMAA…LIWL and WAWL…VLTL. Active-site residues include Asp-155 and Asp-458. 5 helical membrane-spanning segments follow: residues 541–561, 568–588, 658–678, 686–706, and 723–743; these read FPTL…ISLF, WFIP…AESL, AMFV…VLGI, GPGG…IVAI, and LPAS…ILSI.

This sequence belongs to the glycosyltransferase 2 family. Plant cellulose synthase-like E subfamily.

It is found in the golgi apparatus membrane. In terms of biological role, thought to be a Golgi-localized beta-glycan synthase that polymerize the backbones of noncellulosic polysaccharides (hemicelluloses) of plant cell wall. The sequence is that of Cellulose synthase-like protein E2 (CSLE2) from Oryza sativa subsp. japonica (Rice).